The chain runs to 212 residues: ER lumen protein-retaining receptor 1 (212 aa).

Residues 1-4 (MNIF) lie on the Lumenal side of the membrane. Residues 5–24 (RFLGDISHLSAILILLLKIW) traverse the membrane as a helical segment. Residues 25–32 (KSRSCAGI) are Cytoplasmic-facing. A helical transmembrane segment spans residues 33–52 (SGKSQLLFAIVFTTRYLDLF). The interaction with the K-D-E-L motif on target proteins stretch occupies residues 47-48 (RY). Residues 53 to 58 (TNFISL) lie on the Lumenal side of the membrane. The chain crosses the membrane as a helical span at residues 59-79 (YNTSMKMVYVASSYATIWMIY). Topologically, residues 80 to 92 (SKFKATYDGNHDT) are cytoplasmic. A helical membrane pass occupies residues 93–110 (FRVEFLIVPTAILAFLVN). Over 111 to 116 (HDFTPL) the chain is Lumenal. The chain crosses the membrane as a helical span at residues 117–135 (EILWTFSIYLESVAILPQL). The Cytoplasmic portion of the chain corresponds to 136-149 (FMVSKTGEAETITS). The helical transmembrane segment at 150 to 168 (HYLFALGIYRALYLFNWIW) threads the bilayer. Positions 159-169 (RALYLFNWIWR) are interaction with the K-D-E-L motif on target proteins. Over 169 to 178 (RYQFEGFFDL) the chain is Lumenal. The chain crosses the membrane as a helical span at residues 179 to 199 (IAIVAGLVQTVLYCDFFYLYI). At 200 to 212 (TKVLKGKKLSLPA) the chain is on the cytoplasmic side. The interval 204-207 (KGKK) is important for recycling of cargo proteins with the sequence motif K-D-E-L from the Golgi to the endoplasmic reticulum.

It belongs to the ERD2 family.

Its subcellular location is the golgi apparatus membrane. It is found in the cytoplasmic vesicle. It localises to the COPI-coated vesicle membrane. The protein localises to the endoplasmic reticulum membrane. The protein resides in the endoplasmic reticulum-Golgi intermediate compartment membrane. In terms of biological role, receptor for the C-terminal sequence motif K-D-E-L that is present on endoplasmic reticulum resident proteins and that mediates their recycling from the Golgi back to the endoplasmic reticulum. This Xenopus tropicalis (Western clawed frog) protein is ER lumen protein-retaining receptor 1 (kdelr1).